The sequence spans 585 residues: uncharacterized protein (585 aa).

The tract at residues 1 to 34 is disordered; the sequence is MNAYVRDSESVYSESYPPENFISNEPEKSKDKDN. Residues 1-89 are Cytoplasmic-facing; the sequence is MNAYVRDSES…KRRLKSRHIQ (89 aa). Residues 10–19 are compositionally biased toward low complexity; it reads SVYSESYPPE. Over residues 25–34 the composition is skewed to basic and acidic residues; that stretch reads EPEKSKDKDN. Residues 90–110 form a helical membrane-spanning segment; sequence MIGIGGAIGTGVWVGSSKSLY. The Extracellular portion of the chain corresponds to 111–121; sequence RGGAASVLIDY. Residues 122–142 form a helical membrane-spanning segment; that stretch reads CIVGTMVFCTVYALGELAVAF. Topologically, residues 143–159 are cytoplasmic; it reads PTRGSFVTHATRFIDES. A helical transmembrane segment spans residues 160-180; that stretch reads WGFALSWNYVFSFIVTIPLEL. Residues 181 to 193 lie on the Extracellular side of the membrane; that stretch reads TTGTMMIKYWTNL. Residues 194–214 form a helical membrane-spanning segment; it reads NSGIWVTVFIVFLFFINIFGV. The Cytoplasmic portion of the chain corresponds to 215–221; it reads KGYGEME. A helical membrane pass occupies residues 222 to 242; the sequence is FIMSTIKVVAMCGFIILGIII. The Extracellular segment spans residues 243–271; it reads DCGGVPTDHRGYMGTHIFRENAFRHKFKG. The helical transmembrane segment at 272 to 292 threads the bilayer; it reads FCAVFTSAAFSFSGTEYVGVA. Residues 293–313 are Cytoplasmic-facing; it reads AAETENPAKAFPVAVRQTLFR. Residues 314–334 form a helical membrane-spanning segment; sequence IAIFYILSLFIVSLLISGADP. Residues 335 to 361 lie on the Extracellular side of the membrane; that stretch reads RLTSYHGVDASPFVLAIKDANIKALPS. A helical membrane pass occupies residues 362–382; sequence ILNAIILISVISSANAQLYAG. Topologically, residues 383–407 are cytoplasmic; sequence SRAIHSLGCNGFAPKCFTLVDREGR. The chain crosses the membrane as a helical span at residues 408–428; sequence PLVALLILFLFMFLGYLVETG. Residues 429 to 436 are Extracellular-facing; the sequence is QYDTVFDW. Residues 437–457 traverse the membrane as a helical segment; that stretch reads MLSISGLGTLFCWGSICLAHI. At 458-486 the chain is on the cytoplasmic side; the sequence is RYRAAMKHQNRSLKEVGFVSPFNVYASYY. Residues 487-507 form a helical membrane-spanning segment; the sequence is AFILVCLVLAAEFYVSIFPVG. Residues 508 to 511 lie on the Extracellular side of the membrane; the sequence is GKPD. Residues 512–532 traverse the membrane as a helical segment; sequence ASAFFENYLSAPVILVFFICH. Topologically, residues 533–585 are cytoplasmic; sequence KLYYKTKRITLSNMDLETDFAYKTPVEEEEEEEKSAGSLSIKQRMKKLSDMMC.

It belongs to the amino acid-polyamine-organocation (APC) superfamily.

It is found in the endoplasmic reticulum. It localises to the membrane. This is an uncharacterized protein from Schizosaccharomyces pombe (strain 972 / ATCC 24843) (Fission yeast).